The chain runs to 182 residues: Small ribosomal subunit protein uS5 (182 aa).

In terms of domain architecture, S5 DRBM spans 16 to 79 (FVDRLVHINR…ESAKRGMIYV (64 aa)).

The protein belongs to the universal ribosomal protein uS5 family. In terms of assembly, part of the 30S ribosomal subunit. Contacts proteins S4 and S8.

Its function is as follows. With S4 and S12 plays an important role in translational accuracy. Located at the back of the 30S subunit body where it stabilizes the conformation of the head with respect to the body. This Bartonella henselae (strain ATCC 49882 / DSM 28221 / CCUG 30454 / Houston 1) (Rochalimaea henselae) protein is Small ribosomal subunit protein uS5.